The sequence spans 218 residues: Octanoyltransferase (218 aa).

A BPL/LPL catalytic domain is found at 32-214 (ALTPDEIWLV…HFTQLLGYND (183 aa)). Substrate contacts are provided by residues 71–78 (RGGQITYH), 143–145 (SLG), and 156–158 (GLA). Catalysis depends on Cys-174, which acts as the Acyl-thioester intermediate.

It belongs to the LipB family.

The protein localises to the cytoplasm. It catalyses the reaction octanoyl-[ACP] + L-lysyl-[protein] = N(6)-octanoyl-L-lysyl-[protein] + holo-[ACP] + H(+). It participates in protein modification; protein lipoylation via endogenous pathway; protein N(6)-(lipoyl)lysine from octanoyl-[acyl-carrier-protein]: step 1/2. In terms of biological role, catalyzes the transfer of endogenously produced octanoic acid from octanoyl-acyl-carrier-protein onto the lipoyl domains of lipoate-dependent enzymes. Lipoyl-ACP can also act as a substrate although octanoyl-ACP is likely to be the physiological substrate. The protein is Octanoyltransferase of Histophilus somni (strain 129Pt) (Haemophilus somnus).